A 308-amino-acid polypeptide reads, in one-letter code: 1D-myo-inositol 2-acetamido-2-deoxy-alpha-D-glucopyranoside deacetylase (308 aa).

Zn(2+)-binding residues include H37, D40, and H171.

This sequence belongs to the MshB deacetylase family. Zn(2+) serves as cofactor.

The enzyme catalyses 1D-myo-inositol 2-acetamido-2-deoxy-alpha-D-glucopyranoside + H2O = 1D-myo-inositol 2-amino-2-deoxy-alpha-D-glucopyranoside + acetate. Functionally, catalyzes the deacetylation of 1D-myo-inositol 2-acetamido-2-deoxy-alpha-D-glucopyranoside (GlcNAc-Ins) in the mycothiol biosynthesis pathway. This is 1D-myo-inositol 2-acetamido-2-deoxy-alpha-D-glucopyranoside deacetylase from Mycobacterium sp. (strain JLS).